Consider the following 111-residue polypeptide: MSAQVMRPGTPQHEGQEFLSGTDEELAVAMRHYLAYSGRFTVPDMASTENSTRRVIHEVEMSSYPNWIGTTQERVVHIKGDILELSTVHPLVISGIEQRSFLTWRKLPRLT.

Residues methionine 1–glycine 21 form a disordered region.

Its pathway is secondary metabolite biosynthesis. Functionally, 4'-hydroxy-3'-methoxypropiophenone carrier protein; part of the gene cluster that mediates the biosynthesis of 2,4'-dihydroxy-3'-methoxypropiophenone. The first step of the pathway is the conversion of acetate into acetyl-CoA by the acyl-CoA ligase ppsA. Acetyl-CoA is then used as a starter unit by the polyketide synthase ppsB and condensed with 4 malonyl-CoA unit to produce the pentaketide backbone. During polyketide extension, the polykedite chain is probably reduced and dehydrated by the KR and PT domains, respectively. O-methylation seems to be catalyzed by an unknown methyltransferase rather than by the CMeT domain of ppsB. Two hydroxylations and one further decarboxylation step catalyzed by yet unknown enzymes are then required to yield 4'-hydroxy-3'-methoxypropiophenone. PpsC functions as a carrier protein to transport 4'-hydroxy-3'-methoxypropiophenone to a specific cell compartment in which 4'-hydroxy-3'-methoxypropiophenone is hydroxylated to 2,4'-dihydroxy-3'-methoxypropiophenone by a still to be identified enzyme. In Aspergillus oryzae (strain ATCC 42149 / RIB 40) (Yellow koji mold), this protein is 4'-hydroxy-3'-methoxypropiophenone carrier protein ppsC.